Here is a 163-residue protein sequence, read N- to C-terminus: Lectin-like protein EP153R (163 aa).

The Cytoplasmic portion of the chain corresponds to 1–26; it reads MFSNKKYIGLINKKEGLKKKIDDYSI. A helical membrane pass occupies residues 27-47; the sequence is LIIGILIGTNILSLIINIIGE. Residues 48–163 lie on the Extracellular side of the membrane; the sequence is INKPICYQNN…YTDLLFICSK (116 aa). An intrachain disulfide couples C63 to C74. Residues 63 to 162 form a lectin-like region; it reads CPKDWVGYNN…HYTDLLFICS (100 aa). N84, N96, N97, N103, N109, N115, N129, and N135 each carry an N-linked (GlcNAc...) asparagine; by host glycan. A disulfide bridge links C92 with C161.

It belongs to the asfivirus lectin-like protein family. Homodimer.

It is found in the host endoplasmic reticulum membrane. In terms of biological role, down-regulates MHC-I expression by impairing the appropriate configuration or presentation into the plasma membrane of the latter. Participates in viral hemadsorption, which may help viral spread. Reduces the transactivating activity of host TP53, thus inhibiting apoptosis. Non-essential for virus growth in swine macrophage cell cultures. The protein is Lectin-like protein EP153R of African swine fever virus (isolate Warthog/Namibia/Wart80/1980) (ASFV).